A 2057-amino-acid polypeptide reads, in one-letter code: Protein TIC 214 (2057 aa).

4 helical membrane passes run 13–33 (KIIN…AFSI), 62–82 (LIMG…HIAL), 158–178 (LFVT…CEFF), and 206–226 (SDYF…HSFG). Residues 248 to 340 (LILKGTDEEE…RVIQEKERKS (93 aa)) adopt a coiled-coil conformation. The segment covering 288-302 (NHLKKKKDRQKKQGT) has biased composition (basic residues). Disordered stretches follow at residues 288–316 (NHLK…NSNT), 614–807 (ETHT…EEKG), 890–910 (DEQT…NDRV), 1597–1634 (EEEE…TNND), and 1724–1817 (KKKN…KSLS). Composition is skewed to basic and acidic residues over residues 621 to 657 (ATDK…KETK) and 665 to 702 (NTVD…KETK). The span at 704-713 (NASKETNTVN) shows a compositional bias: polar residues. Composition is skewed to basic and acidic residues over residues 714–807 (KETK…EEKG) and 891–900 (EQTKREEKPK). The span at 1597–1619 (EEEEINPEEEINPEEEINPEEEI) shows a compositional bias: acidic residues. Residues 1622–1634 (SSNQKTPIGTNND) show a composition bias toward polar residues. Residues 1753–1817 (TNSEKKSKTN…ETDSEKKSLS (65 aa)) are compositionally biased toward basic and acidic residues.

The protein belongs to the TIC214 family. Part of the Tic complex.

Its subcellular location is the plastid. The protein resides in the chloroplast inner membrane. Functionally, involved in protein precursor import into chloroplasts. May be part of an intermediate translocation complex acting as a protein-conducting channel at the inner envelope. The polypeptide is Protein TIC 214 (Ipomoea purpurea (Common morning glory)).